Reading from the N-terminus, the 251-residue chain is MREIEISRAIVEAYFNDLLQNLQLDIAIVGAGPSGMVAGYYLAKGGAKVAIFEKKLSVGGGIWGGAMGFNRVVVQESAREILDEFGVDYSQVGNGLYVLDSIELASTLASKAVKAGAKIFNMVEVEDLVVKDGRVSGLVINWTPVMMTGLHVDPLTVEAKFVVDSTGHGAQISQHLLKRGLIKAIPGEGPMWAEKGEELTVEHTREVFPGLYATGMAANALAGAPRMGPIFGGMLLSGRKAALEILQKLGK.

NAD(+) is bound by residues Ser34, 53–54 (EK), Gly61, Val125, and 151–153 (HVD). The Fe cation site is built by Asp153 and His168. Met216 is an NAD(+) binding site. Arg226 provides a ligand contact to glycine.

This sequence belongs to the THI4 family. In terms of assembly, homooctamer; tetramer of dimers. It depends on Fe(2+) as a cofactor.

The enzyme catalyses hydrogen sulfide + glycine + NAD(+) = ADP-5-ethyl-4-methylthiazole-2-carboxylate + nicotinamide + 3 H2O + H(+). The protein operates within cofactor biosynthesis; thiamine diphosphate biosynthesis. Involved in the biosynthesis of the thiazole moiety of thiamine. Catalyzes the conversion of NAD and glycine to adenosine diphosphate 5-(2-hydroxyethyl)-4-methylthiazole-2-carboxylate (ADT), an adenylated thiazole intermediate, using free sulfide as a source of sulfur. The polypeptide is Thiamine thiazole synthase (Thermococcus kodakarensis (strain ATCC BAA-918 / JCM 12380 / KOD1) (Pyrococcus kodakaraensis (strain KOD1))).